A 184-amino-acid chain; its full sequence is MAEVLRPEMLDISNDTSSLASPKLLHVLAVDDSMVDRKFIERLLRVSSCKVTVVDSATRALQYLGLDGENNSSVGFEDLKINLIMTDYSMPGMTGYELLKKIKESSAFREIPVVIMSSENILPRIDRCLEEGAEDFLLKPVKLADVKRLRDSLMKAEERAFKNIMHKRELEANDIYSQLKRAKI.

Residues 26 to 154 (HVLAVDDSMV…DVKRLRDSLM (129 aa)) form the Response regulatory domain. Asp-87 is subject to 4-aspartylphosphate.

The protein belongs to the ARR family. Type-A subfamily. In terms of processing, two-component system major event consists of a His-to-Asp phosphorelay between a sensor histidine kinase (HK) and a response regulator (RR). In plants, the His-to-Asp phosphorelay involves an additional intermediate named Histidine-containing phosphotransfer protein (HPt). This multistep phosphorelay consists of a His-Asp-His-Asp sequential transfer of a phosphate group between first a His and an Asp of the HK protein, followed by the transfer to a conserved His of the HPt protein and finally the transfer to an Asp in the receiver domain of the RR protein. In terms of tissue distribution, predominantly expressed in roots and shoot apical meristems.

It is found in the nucleus. Its function is as follows. Functions as a response regulator involved in His-to-Asp phosphorelay signal transduction system. Phosphorylation of the Asp residue in the receiver domain activates the ability of the protein to promote the transcription of target genes. Type-A response regulators seem to act as negative regulators of the cytokinin signaling. The polypeptide is Two-component response regulator ARR5 (ARR5) (Arabidopsis thaliana (Mouse-ear cress)).